Here is a 141-residue protein sequence, read N- to C-terminus: Large ribosomal subunit protein uL11 (141 aa).

The interval 1–23 (MAKQVTGQAKFQVPGGQATPAPP) is disordered.

This sequence belongs to the universal ribosomal protein uL11 family. In terms of assembly, part of the ribosomal stalk of the 50S ribosomal subunit. Interacts with L10 and the large rRNA to form the base of the stalk. L10 forms an elongated spine to which L12 dimers bind in a sequential fashion forming a multimeric L10(L12)X complex. In terms of processing, one or more lysine residues are methylated.

In terms of biological role, forms part of the ribosomal stalk which helps the ribosome interact with GTP-bound translation factors. This Rhodopirellula baltica (strain DSM 10527 / NCIMB 13988 / SH1) protein is Large ribosomal subunit protein uL11.